Reading from the N-terminus, the 674-residue chain is Transcription activator of gluconeogenesis PMAA_028970 (674 aa).

Positions 1–46 (MMDTDKDDLPSATDHSEHESGDAVKVEGGASKTASNSKDPSRPRRK) are disordered. Basic and acidic residues predominate over residues 14 to 25 (DHSEHESGDAVK). Residues 52-80 (CFACQRAHLTCGDERPCQRCIKRGLQDAC) constitute a DNA-binding region (zn(2)-C6 fungal-type). Disordered regions lie at residues 117–181 (ISPT…ATPA), 250–321 (TGAG…SGLY), 344–374 (IGSN…SPMK), and 519–557 (NLNV…PGPN). A compositionally biased stretch (polar residues) spans 120–148 (TEYTQNGTNNAQQQQQKSGTIYASSTPSY). Over residues 149 to 163 (NNNNGTFDTNNATNT) the composition is skewed to low complexity. Polar residues-rich tracts occupy residues 269–278 (GQRSNSQQFG) and 285–294 (TTESPSQQSF). 2 stretches are compositionally biased toward low complexity: residues 348 to 366 (TFAS…IAPS) and 529 to 540 (NTSSQSDSTSSS).

It belongs to the ERT1/acuK family.

It is found in the nucleus. In terms of biological role, transcription factor which regulates nonfermentable carbon utilization. Activator of gluconeogenetic genes. The protein is Transcription activator of gluconeogenesis PMAA_028970 of Talaromyces marneffei (strain ATCC 18224 / CBS 334.59 / QM 7333) (Penicillium marneffei).